The primary structure comprises 720 residues: Phosphatase and actin regulator 4 (720 aa).

Residues 1–48 (MGQPRFSRPVHPAAAAEEVDHPPSDAGMGVDVLESGDTTPPTKRKSKF) form a disordered region. Residues 74–99 (EVLERKISMRKPREELVKRGVLLEDP) form an RPEL 1 repeat. Disordered stretches follow at residues 294–417 (SGTG…GLPR), 454–568 (NDGF…DTLA), and 610–648 (RPTA…LSQR). Residues 346–368 (TYPPPSPSPPLPTHIPPEPPRMP) show a composition bias toward pro residues. Residues 393–405 (KDFRSLEVSKRTA) show a composition bias toward basic and acidic residues. Acidic residues-rich tracts occupy residues 481-494 (DDEE…EEEQ), 521-534 (EEQE…DSDS), and 542-551 (DDEEDEEEDE). RPEL repeat units lie at residues 601 to 626 (TTLI…QPKN) and 639 to 664 (RRLT…RFNE). Residues 626 to 636 (NEADRQAEKRE) are compositionally biased toward basic and acidic residues. Basic residues predominate over residues 637–646 (IKRRLTRKLS).

It belongs to the phosphatase and actin regulator family. In terms of assembly, binds PPP1CA and actin.

Its subcellular location is the cytoplasm. The protein localises to the cell projection. It localises to the lamellipodium. In terms of biological role, regulator of protein phosphatase 1 (PP1) required for neural tube and optic fissure closure, and enteric neural crest cell (ENCCs) migration during development. Acts as an activator of PP1. During neural tube closure, localizes to the ventral neural tube and activates PP1, leading to down-regulate cell proliferation within cranial neural tissue and the neural retina. Also acts as a regulator of migration of enteric neural crest cells (ENCCs) by activating PP1, leading to repression of the integrin signaling through the RHO/ROCK pathway. In Gallus gallus (Chicken), this protein is Phosphatase and actin regulator 4 (PHACTR4).